The primary structure comprises 382 residues: Protein arginine N-methyltransferase PRMT10 (382 aa).

Positions Met-1–Gly-21 are disordered. Over residues Gly-7–Ala-17 the composition is skewed to low complexity. Residues Glu-28 to Glu-359 enclose the SAM-dependent MTase PRMT-type domain. Active-site residues include Glu-142 and Glu-151. The tract at residues Glu-189–Glu-229 is dimerization arm.

The protein belongs to the class I-like SAM-binding methyltransferase superfamily. Protein arginine N-methyltransferase family. In terms of assembly, ring-like homodimer.

It catalyses the reaction L-arginyl-[protein] + 2 S-adenosyl-L-methionine = N(omega),N(omega)-dimethyl-L-arginyl-[protein] + 2 S-adenosyl-L-homocysteine + 2 H(+). Its function is as follows. Methylates (mono and asymmetric dimethylation) the guanidino nitrogens of arginyl residues in some proteins. The polypeptide is Protein arginine N-methyltransferase PRMT10 (PRMT10) (Oryza sativa subsp. indica (Rice)).